The primary structure comprises 338 residues: Phenylalanine--tRNA ligase alpha subunit (338 aa).

Glu-253 lines the Mg(2+) pocket.

It belongs to the class-II aminoacyl-tRNA synthetase family. Phe-tRNA synthetase alpha subunit type 1 subfamily. Tetramer of two alpha and two beta subunits. It depends on Mg(2+) as a cofactor.

It is found in the cytoplasm. It carries out the reaction tRNA(Phe) + L-phenylalanine + ATP = L-phenylalanyl-tRNA(Phe) + AMP + diphosphate + H(+). This Citrifermentans bemidjiense (strain ATCC BAA-1014 / DSM 16622 / JCM 12645 / Bem) (Geobacter bemidjiensis) protein is Phenylalanine--tRNA ligase alpha subunit.